We begin with the raw amino-acid sequence, 219 residues long: Aspartic protease inhibitor 10 (219 aa).

A signal peptide spans 1–23; that stretch reads MMKCLFLLCLCLVPIVVFSSTFT. A propeptide spanning residues 24–32 is cleaved from the precursor; sequence SQNLIDLPS. Residues 26–31 carry the Vacuolar targeting signal motif; that stretch reads NLIDLP. An N-linked (GlcNAc...) asparagine glycan is attached at Asn51. Intrachain disulfides connect Cys80-Cys125 and Cys173-Cys184.

This sequence belongs to the protease inhibitor I3 (leguminous Kunitz-type inhibitor) family. As to expression, in tubers and green buds of untreated plants. After abscisic acid treatment or mechanical wounding is mostly accumulated in leaves, to a lesser extent in stems, but not in roots.

Its function is as follows. Inhibitor of cathepsin D (aspartic protease) and trypsin (serine protease). Protects the plant by inhibiting proteases of invading organisms. The polypeptide is Aspartic protease inhibitor 10 (CDI) (Solanum tuberosum (Potato)).